Reading from the N-terminus, the 158-residue chain is Cyclic pyranopterin monophosphate synthase (158 aa).

Substrate is bound by residues 75 to 77 (LCH) and 113 to 114 (ME). Asp128 is a catalytic residue.

This sequence belongs to the MoaC family. Homohexamer; trimer of dimers.

It catalyses the reaction (8S)-3',8-cyclo-7,8-dihydroguanosine 5'-triphosphate = cyclic pyranopterin phosphate + diphosphate. The protein operates within cofactor biosynthesis; molybdopterin biosynthesis. Catalyzes the conversion of (8S)-3',8-cyclo-7,8-dihydroguanosine 5'-triphosphate to cyclic pyranopterin monophosphate (cPMP). The polypeptide is Cyclic pyranopterin monophosphate synthase (Acidiphilium cryptum (strain JF-5)).